Here is a 516-residue protein sequence, read N- to C-terminus: uncharacterized protein (516 aa).

A uDENN domain is found at 31-185 (ACIFLSKFDM…LDKFDIFEKF (155 aa)). In terms of domain architecture, cDENN spans 211 to 365 (HLVEYLPYWT…LEVYEKLILG (155 aa)). One can recognise a dDENN domain in the interval 367–513 (LQEDASTNAT…DISNLPECLG (147 aa)). 2 S-palmitoyl cysteine lipidation sites follow: Cys511 and Cys516.

Palmitoylated by AKR1.

It localises to the lipid droplet. Its function is as follows. May be involved in lipid metabolism. This is an uncharacterized protein from Saccharomyces cerevisiae (strain ATCC 204508 / S288c) (Baker's yeast).